The following is a 783-amino-acid chain: DNA repair and recombination protein RAD54-like (783 aa).

The interval arginine 2 to glutamine 9 is required for chromatin remodeling, strand pairing activities and coupling of ATPase activity. Threonine 22 is modified (phosphothreonine). Residues glutamate 165 to glutamate 340 enclose the Helicase ATP-binding domain. Residue aspartate 178 to threonine 185 coordinates ATP. The DEGH box signature appears at aspartate 291–histidine 294. Residues leucine 497 to threonine 654 form the Helicase C-terminal domain. The disordered stretch occupies residues alanine 737–phenylalanine 783. A compositionally biased stretch (acidic residues) spans aspartate 765–alanine 776.

It belongs to the SNF2/RAD54 helicase family. Interacts (via N-terminus) with spn-A/Rad51.

The protein resides in the nucleus. In terms of biological role, involved in mitotic DNA repair and meiotic recombination. Functions in the recombinational DNA repair pathway. Essential for interhomolog gene conversion (GC), but may have a less important role in intersister GC than spn-A/Rad51. In the presence of DNA, spn-A/Rad51 enhances the ATPase activity of okr/Rad54. The chain is DNA repair and recombination protein RAD54-like from Drosophila mojavensis (Fruit fly).